Here is a 603-residue protein sequence, read N- to C-terminus: Polypeptide N-acetylgalactosaminyltransferase 10 (603 aa).

At 1-11 (MRRKEKRLLQA) the chain is on the cytoplasmic side. The chain crosses the membrane as a helical; Signal-anchor for type II membrane protein span at residues 12–31 (VALVLAALVLLPNVGLWALY). The Lumenal segment spans residues 32 to 603 (RERQPDGTPG…STVLEKFNRN (572 aa)). Residues 38–59 (GTPGGSGAAVAPAAGQGSHSRQ) form a disordered region. Residues 45–55 (AAVAPAAGQGS) show a composition bias toward low complexity. N-linked (GlcNAc...) asparagine glycans are attached at residues Asn124 and Asn146. Disulfide bonds link Cys135–Cys365, Cys356–Cys432, Cys471–Cys488, Cys523–Cys538, and Cys563–Cys578. Residues 144 to 253 (LPNTSIIIPF…VNWLPPLLDR (110 aa)) are catalytic subdomain A. Substrate contacts are provided by His154, Glu156, Asp185, and Arg214. Asp237 is a binding site for Mn(2+). Ser238 provides a ligand contact to substrate. His239 is a binding site for Mn(2+). The tract at residues 311–373 (PFESPVMAGG…PCSRVGHIYR (63 aa)) is catalytic subdomain B. Residue Trp342 coordinates substrate. His370 serves as a coordination point for Mn(2+). Substrate contacts are provided by Arg373 and Tyr378. Residues 373 to 384 (RKYVPYKVPAGV) are flexible loop. Residues 458–590 (AAWGEIRNVG…SSLTQQWLFE (133 aa)) form the Ricin B-type lectin domain. Asn593 is a glycosylation site (N-linked (GlcNAc...) asparagine).

The protein belongs to the glycosyltransferase 2 family. GalNAc-T subfamily. Mn(2+) is required as a cofactor. As to expression, widely expressed. Expressed at high level in small intestine, and at intermediate levels in stomach, pancreas, ovary, thyroid gland and spleen. Weakly expressed in other tissues.

It is found in the golgi apparatus membrane. It carries out the reaction L-seryl-[protein] + UDP-N-acetyl-alpha-D-galactosamine = a 3-O-[N-acetyl-alpha-D-galactosaminyl]-L-seryl-[protein] + UDP + H(+). The enzyme catalyses L-threonyl-[protein] + UDP-N-acetyl-alpha-D-galactosamine = a 3-O-[N-acetyl-alpha-D-galactosaminyl]-L-threonyl-[protein] + UDP + H(+). It participates in protein modification; protein glycosylation. Catalyzes the initial reaction in O-linked oligosaccharide biosynthesis, the transfer of an N-acetyl-D-galactosamine residue to a serine or threonine residue on the protein receptor. Has activity toward Muc5Ac and EA2 peptide substrates. The polypeptide is Polypeptide N-acetylgalactosaminyltransferase 10 (GALNT10) (Homo sapiens (Human)).